The following is a 459-amino-acid chain: MPQKYFGTDGIRGKANVFPMTPDFAMKVGMAVGILFRSQNQSRRVVIGKDTRLSGYMLENALVSGFTAAGMEAFLLGPVPTPAVAMLCRSLRADLGVMISASHNPFYDNGIKLFGPDGFKLSDEIEEKIEQLIDTDLSKSLASCAEIGYAKRVEGDIYRYIEYAKRTLPRDVRLDNLRIVVDCANGAAYKAAPRALWELGAEVFAINDTPNGTNINHKCGSTDLASLKQKVHEVRADVGIALDGDGDRVLLVDEKAQTVDGDQLIAVIAEHWHKNGRLQSKGVVTTIMSNLGLERFLNSKGLDLVRTKVGDRYVVDAMRKKGYNVGGEASGHIVLSDFGTTGDGLVAALQILACMQEIQIPMSHLCQRFEPVPQIFKNVMIKNKNVLKKNPVKTAIEQATQRLGKKARLVIRASGTEPVIRIMGEGDEREMLDAVVTEMVDIITHHDTLSKACASLERS.

Residue Ser-102 is the Phosphoserine intermediate of the active site. Mg(2+)-binding residues include Ser-102, Asp-243, Asp-245, and Asp-247. Ser-102 carries the phosphoserine modification.

The protein belongs to the phosphohexose mutase family. Requires Mg(2+) as cofactor. Activated by phosphorylation.

The catalysed reaction is alpha-D-glucosamine 1-phosphate = D-glucosamine 6-phosphate. Its function is as follows. Catalyzes the conversion of glucosamine-6-phosphate to glucosamine-1-phosphate. The polypeptide is Phosphoglucosamine mutase (Bartonella henselae (strain ATCC 49882 / DSM 28221 / CCUG 30454 / Houston 1) (Rochalimaea henselae)).